Consider the following 278-residue polypeptide: MFPLSGCWRTELLLLLLLAVAVRESWQIEEKSCDLVGEKDKESKNEVALLERLRPLFNKSFESTVGQGSDTYSYIFRVCREAGNHSSGAGLVQINKSNEKETVVGRINETHIFNGSNWIMLIYKGGDEYDNHCGKEQRRAVVMISCNRHTLAGNFNPVSEERGKIQDCFYLFEMDSSLACSPEVSHLSVGSILLVIFASLVAVYIIGGFLYQRLVVGAKGMEQFPHLAFWQDLGNLVADGCDFVCRSKPRSVPAAYRGVGDDQLGEESEERDDHLLPM.

The N-terminal stretch at 1–21 is a signal peptide; sequence MFPLSGCWRTELLLLLLLAVA. Topologically, residues 22 to 188 are lumenal; that stretch reads VRESWQIEEK…ACSPEVSHLS (167 aa). The MRH domain maps to 31–182; the sequence is KSCDLVGEKD…EMDSSLACSP (152 aa). A disulfide bridge links cysteine 33 with cysteine 79. 5 N-linked (GlcNAc...) asparagine glycosylation sites follow: asparagine 58, asparagine 84, asparagine 95, asparagine 108, and asparagine 114. Disulfide bonds link cysteine 133–cysteine 168 and cysteine 146–cysteine 180. Residues 189–209 traverse the membrane as a helical segment; that stretch reads VGSILLVIFASLVAVYIIGGF. Residues 210–278 are Cytoplasmic-facing; it reads LYQRLVVGAK…EERDDHLLPM (69 aa). Residues 256 to 278 are disordered; the sequence is YRGVGDDQLGEESEERDDHLLPM. Phosphoserine is present on serine 268.

Homodimer. Binds GGA1, GGA2 and GGA3.

The protein localises to the lysosome membrane. Its function is as follows. Transport of phosphorylated lysosomal enzymes from the Golgi complex and the cell surface to lysosomes. Lysosomal enzymes bearing phosphomannosyl residues bind specifically to mannose-6-phosphate receptors in the Golgi apparatus and the resulting receptor-ligand complex is transported to an acidic prelyosomal compartment where the low pH mediates the dissociation of the complex. This Rattus norvegicus (Rat) protein is Cation-dependent mannose-6-phosphate receptor (M6pr).